Consider the following 84-residue polypeptide: Inactive transposase YbfQ (84 aa).

This is Inactive transposase YbfQ (ybfQ) from Escherichia coli (strain K12).